Reading from the N-terminus, the 607-residue chain is Chaperone protein HtpG (607 aa).

The interval 1-323 is a; substrate-binding; sequence MKKEEKIFKA…CDSLSLNISR (323 aa). The b stretch occupies residues 324 to 534; sequence EILQQNAELQ…KGGLSLEMEK (211 aa). A c region spans residues 535–607; the sequence is TLSEMTNNND…FIKNLNSLIK (73 aa).

This sequence belongs to the heat shock protein 90 family. As to quaternary structure, homodimer.

It is found in the cytoplasm. Functionally, molecular chaperone. Has ATPase activity. The sequence is that of Chaperone protein HtpG from Fusobacterium nucleatum subsp. nucleatum (strain ATCC 25586 / DSM 15643 / BCRC 10681 / CIP 101130 / JCM 8532 / KCTC 2640 / LMG 13131 / VPI 4355).